Here is a 312-residue protein sequence, read N- to C-terminus: Taste receptor type 2 member 135 (312 aa).

Topologically, residues 1 to 19 (MSTGHTVLGCQTTDKTVVT) are extracellular. Residues 20 to 40 (LFIILVLLCLVAVVGNGFIII) traverse the membrane as a helical segment. Residues 41–66 (ALGMKWLLRRTLSAHNKLLISLAASR) are Cytoplasmic-facing. The chain crosses the membrane as a helical span at residues 67 to 87 (FCLQCVVIGKNIYVFLNPTSF). Over 88–97 (PYNPVIQLLN) the chain is Extracellular. Residues 98–118 (LMWDFLTAATIWLCSLLGFFY) form a helical membrane-spanning segment. Residues 119–140 (CVKIATLTHPVFVWLKYRLPGW) lie on the Cytoplasmic side of the membrane. Residues 141-161 (VPWMLLSAVGMSSLTSILCFI) form a helical membrane-spanning segment. The Extracellular portion of the chain corresponds to 162 to 198 (GNYMIYQNHAKSGHQPWNVTGNSLRHSLEKFYFFSIK). Asparagine 179 is a glycosylation site (N-linked (GlcNAc...) asparagine). Residues 199–219 (IIMWTIPTVVFSIFMSLLLVS) traverse the membrane as a helical segment. The Cytoplasmic portion of the chain corresponds to 220 to 244 (LVRHMKKTFLALSELRDVWAQAHFK). A helical transmembrane segment spans residues 245 to 265 (ALLPLLSFIVLFISCFLTLVL). Residues 266–277 (SSASNTPYQEFR) are Extracellular-facing. A helical membrane pass occupies residues 278–298 (YWMWQVVIHLCTVIHPIVILF). Topologically, residues 299-312 (SNPVLRVVIKRGCC) are cytoplasmic.

The protein belongs to the G-protein coupled receptor T2R family.

It is found in the membrane. Its function is as follows. Putative taste receptor which may play a role in the perception of bitterness. This is Taste receptor type 2 member 135 (Tas2r135) from Mus musculus (Mouse).